We begin with the raw amino-acid sequence, 953 residues long: Isoleucine--tRNA ligase (953 aa).

A 'HIGH' region motif is present at residues 57 to 67; that stretch reads PYANGDIHIGH. An L-isoleucyl-5'-AMP-binding site is contributed by glutamate 582. The short motif at 623-627 is the 'KMSKS' region element; that stretch reads KMSKS. ATP is bound at residue lysine 626. 4 residues coordinate Zn(2+): cysteine 916, cysteine 919, cysteine 936, and cysteine 939.

Belongs to the class-I aminoacyl-tRNA synthetase family. IleS type 1 subfamily. As to quaternary structure, monomer. The cofactor is Zn(2+).

Its subcellular location is the cytoplasm. The enzyme catalyses tRNA(Ile) + L-isoleucine + ATP = L-isoleucyl-tRNA(Ile) + AMP + diphosphate. Functionally, catalyzes the attachment of isoleucine to tRNA(Ile). As IleRS can inadvertently accommodate and process structurally similar amino acids such as valine, to avoid such errors it has two additional distinct tRNA(Ile)-dependent editing activities. One activity is designated as 'pretransfer' editing and involves the hydrolysis of activated Val-AMP. The other activity is designated 'posttransfer' editing and involves deacylation of mischarged Val-tRNA(Ile). The chain is Isoleucine--tRNA ligase from Bordetella petrii (strain ATCC BAA-461 / DSM 12804 / CCUG 43448).